The primary structure comprises 395 residues: MTEPETLALLEVKGPETLEKSPPQALVPNGRKLEGEDEVESLGAESSRVGSSAESPTAREGTEDGLDSTVSEAATLPWGTGPQPSAPFPDPPGWRNIEPEPPESEPPTKLEELPEDEASLLPEKAARAFVPIDLQCIERRPQEDLVVCCEASEGEHRRTFLPPRATHPEPPECKWAEAVVKPPGHSCGGCGGCGGREALRAVASVGAALILFPCLLYGAYAFLPFDAPRLPTMSSRLIYTLRCGVFATFPIVLGILVYGLSLLCFAALRPFGEPRREVEIHRQYVAQSVQLFILYFFNLAVLSTYLPQDALKLLPLLTGLFAISRLIYWLTFAVGRSFRGFGYGLTFLPLLSMLLWNFYYMFVVEPERMLTASESRLDYPDHARSASDYRPRSRG.

The interval 1 to 115 (MTEPETLALL…PPTKLEELPE (115 aa)) is disordered. Over 1-204 (MTEPETLALL…GREALRAVAS (204 aa)) the chain is Cytoplasmic. Residues 205–225 (VGAALILFPCLLYGAYAFLPF) form a helical membrane-spanning segment. Over 226–244 (DAPRLPTMSSRLIYTLRCG) the chain is Extracellular. A helical transmembrane segment spans residues 245–265 (VFATFPIVLGILVYGLSLLCF). Residues 266–290 (AALRPFGEPRREVEIHRQYVAQSVQ) lie on the Cytoplasmic side of the membrane. A helical membrane pass occupies residues 291–311 (LFILYFFNLAVLSTYLPQDAL). Topologically, residues 312-313 (KL) are extracellular. Residues 314–334 (LPLLTGLFAISRLIYWLTFAV) form a helical membrane-spanning segment. Over 335–343 (GRSFRGFGY) the chain is Cytoplasmic. Residues 344 to 364 (GLTFLPLLSMLLWNFYYMFVV) traverse the membrane as a helical segment. Over 365 to 395 (EPERMLTASESRLDYPDHARSASDYRPRSRG) the chain is Extracellular.

Its subcellular location is the lysosome. The protein localises to the golgi apparatus. The protein resides in the trans-Golgi network. It localises to the membrane. In terms of biological role, contributes to the epidermal integrity and skin barrier function. Plays a role in the lamellar granule (LG) secretory system and in the stratum corneum (SC) epithelial cell formation. The protein is Transmembrane protein 79 (TMEM79) of Bos taurus (Bovine).